Here is a 309-residue protein sequence, read N- to C-terminus: tRNA uridine(34) hydroxylase (309 aa).

One can recognise a Rhodanese domain in the interval 130–225 (RGEEVVFFDG…YGEKYGNDGL (96 aa)). Cysteine 185 (cysteine persulfide intermediate) is an active-site residue.

This sequence belongs to the TrhO family.

The catalysed reaction is uridine(34) in tRNA + AH2 + O2 = 5-hydroxyuridine(34) in tRNA + A + H2O. Functionally, catalyzes oxygen-dependent 5-hydroxyuridine (ho5U) modification at position 34 in tRNAs. This chain is tRNA uridine(34) hydroxylase, found in Corynebacterium aurimucosum (strain ATCC 700975 / DSM 44827 / CIP 107346 / CN-1) (Corynebacterium nigricans).